Reading from the N-terminus, the 73-residue chain is MKLSVTFIALMLTMTLTQGFVLQAIDGRDNSGLDDLSEADSMEHQLQRRDCGRCPLGQYCDAEAGMCKPTLIM.

Positions 1 to 19 are cleaved as a signal peptide; sequence MKLSVTFIALMLTMTLTQG. Positions 20–47 are excised as a propeptide; that stretch reads FVLQAIDGRDNSGLDDLSEADSMEHQLQ.

This sequence belongs to the conotoxin L superfamily. Post-translationally, contains 2 disulfide bonds. In terms of tissue distribution, expressed by the venom duct.

The protein localises to the secreted. This Californiconus californicus (California cone) protein is Conotoxin Cl14.8.